The sequence spans 309 residues: Dihydroorotate dehydrogenase B (NAD(+)), catalytic subunit (309 aa).

Residues S21 and 45–46 (KA) each bind FMN. Residues K45 and 69 to 73 (NAIGL) each bind substrate. N99 and N127 together coordinate FMN. Residue N127 coordinates substrate. C130 functions as the Nucleophile in the catalytic mechanism. The FMN site is built by K165 and I191. 192–193 (NT) lines the substrate pocket. FMN-binding positions include G217, 243–244 (GG), and 265–266 (GT).

It belongs to the dihydroorotate dehydrogenase family. Type 1 subfamily. As to quaternary structure, heterotetramer of 2 PyrK and 2 PyrD type B subunits. Requires FMN as cofactor.

Its subcellular location is the cytoplasm. The catalysed reaction is (S)-dihydroorotate + NAD(+) = orotate + NADH + H(+). It functions in the pathway pyrimidine metabolism; UMP biosynthesis via de novo pathway; orotate from (S)-dihydroorotate (NAD(+) route): step 1/1. Functionally, catalyzes the conversion of dihydroorotate to orotate with NAD(+) as electron acceptor. This chain is Dihydroorotate dehydrogenase B (NAD(+)), catalytic subunit (pyrD), found in Bacillus thuringiensis (strain Al Hakam).